The chain runs to 505 residues: Cyclin-dependent kinase C-1 (505 aa).

One can recognise a Protein kinase domain in the interval 26 to 325; that stretch reads FEKLEQIGEG…AKDALDAEYF (300 aa). Residues 32 to 40 and Lys-55 each bind ATP; that span reads IGEGTYGQV. Phosphotyrosine is present on Tyr-37. Asp-164 functions as the Proton acceptor in the catalytic mechanism. Thr-198 carries the phosphothreonine modification. A disordered region spans residues 336-505; the sequence is SLPTYESSHE…QRNQQYGWQQ (170 aa). A compositionally biased stretch (low complexity) spans 429–456; that stretch reads PPSGNQSGGYNQSRGGYSSGSYPPQGRG. Positions 482-491 are enriched in gly residues; sequence GQYGGSGSSG. Over residues 492–505 the composition is skewed to low complexity; sequence RGQNQRNQQYGWQQ.

Belongs to the protein kinase superfamily. CMGC Ser/Thr protein kinase family. CDC2/CDKX subfamily. As to quaternary structure, interacts with CYCT1-3. Highly expressed in flowers. Expressed in seedlings, roots, rosettes and stems.

The catalysed reaction is L-seryl-[protein] + ATP = O-phospho-L-seryl-[protein] + ADP + H(+). It carries out the reaction L-threonyl-[protein] + ATP = O-phospho-L-threonyl-[protein] + ADP + H(+). The enzyme catalyses [DNA-directed RNA polymerase] + ATP = phospho-[DNA-directed RNA polymerase] + ADP + H(+). The polypeptide is Cyclin-dependent kinase C-1 (CDKC-1) (Arabidopsis thaliana (Mouse-ear cress)).